We begin with the raw amino-acid sequence, 712 residues long: Elongation factor G (712 aa).

The region spanning 8–290 (TRYRNIGISA…AVIEFLPSPT (283 aa)) is the tr-type G domain. GTP is bound by residues 17 to 24 (AHIDAGKT), 88 to 92 (DTPGH), and 142 to 145 (NKMD).

It belongs to the TRAFAC class translation factor GTPase superfamily. Classic translation factor GTPase family. EF-G/EF-2 subfamily.

Its subcellular location is the cytoplasm. Its function is as follows. Catalyzes the GTP-dependent ribosomal translocation step during translation elongation. During this step, the ribosome changes from the pre-translocational (PRE) to the post-translocational (POST) state as the newly formed A-site-bound peptidyl-tRNA and P-site-bound deacylated tRNA move to the P and E sites, respectively. Catalyzes the coordinated movement of the two tRNA molecules, the mRNA and conformational changes in the ribosome. The chain is Elongation factor G from Acinetobacter baumannii (strain AB0057).